We begin with the raw amino-acid sequence, 228 residues long: Putative N-acetylmannosamine-6-phosphate 2-epimerase (228 aa).

It belongs to the NanE family.

The catalysed reaction is an N-acyl-D-glucosamine 6-phosphate = an N-acyl-D-mannosamine 6-phosphate. Its pathway is amino-sugar metabolism; N-acetylneuraminate degradation; D-fructose 6-phosphate from N-acetylneuraminate: step 3/5. Converts N-acetylmannosamine-6-phosphate (ManNAc-6-P) to N-acetylglucosamine-6-phosphate (GlcNAc-6-P). This Mycoplasmopsis pulmonis (strain UAB CTIP) (Mycoplasma pulmonis) protein is Putative N-acetylmannosamine-6-phosphate 2-epimerase.